Here is a 694-residue protein sequence, read N- to C-terminus: Katanin p80 WD40 repeat-containing subunit B1 (694 aa).

WD repeat units follow at residues 18-58, 61-100, 103-142, 145-186, 188-226, and 229-269; these read AHSS…CIMS, GHTS…ILRT, GHKA…CVFR, GHTQ…TEFT, HTSA…MIGS, and GETG…DVVH. Disordered regions lie at residues 319–410 and 470–492; these read KPIP…PFPA and TTSA…STGI. Over residues 327–349 the composition is skewed to polar residues; that stretch reads ALGTTLRRNYERPTTSCTGQEMK. Basic and acidic residues predominate over residues 350–378; the sequence is QSSEADRRSPEGERRSPSSEDEKEDKESS. A compositionally biased stretch (low complexity) spans 470–481; the sequence is TTSASSPSRPVV. Over residues 482 to 492 the composition is skewed to polar residues; the sequence is NTTKPKPSTGI.

It belongs to the WD repeat KATNB1 family. As to quaternary structure, interacts with katna1. This interaction enhances the microtubule binding and severing activity of katna1 and also targets this activity to the centrosome.

The protein localises to the cytoplasm. The protein resides in the cytoskeleton. Its subcellular location is the microtubule organizing center. It is found in the centrosome. It localises to the spindle pole. The protein localises to the spindle. In terms of biological role, participates in a complex which severs microtubules in an ATP-dependent manner. May act to target the enzymatic subunit of this complex to sites of action such as the centrosome. Microtubule severing may promote rapid reorganization of cellular microtubule arrays and the release of microtubules from the centrosome following nucleation. The polypeptide is Katanin p80 WD40 repeat-containing subunit B1 (katnb1) (Danio rerio (Zebrafish)).